Here is a 558-residue protein sequence, read N- to C-terminus: Galactoside 2-alpha-L-fucosyltransferase (558 aa).

At 1–43 (MDQNSYRRRSSPIRTTTGGSKSVNFSELLQMKYLSSGTMKLTR) the chain is on the cytoplasmic side. A helical; Signal-anchor for type II membrane protein membrane pass occupies residues 44-64 (TFTTCLIVFSVLVAFSMIFHQ). Residues 65–558 (HPSDSNRIMG…EDISWGLKLV (494 aa)) lie on the Lumenal side of the membrane. 2 N-linked (GlcNAc...) asparagine glycosylation sites follow: N88 and N504.

This sequence belongs to the glycosyltransferase 37 family. In terms of assembly, homodimer. Interacts with MUR3, XLT2, XXT2 and XXT5. As to expression, expressed in roots, stems, leaves, flowers, siliques and seedlings.

It is found in the golgi apparatus. It localises to the golgi stack membrane. The protein localises to the golgi apparatus membrane. In terms of biological role, involved in cell wall biosynthesis. Is both necessary and sufficient for the addition of the terminal fucosyl residue on xyloglucan side chains, but is not involved in the fucosylation of other cell wall components. Associates with other xyloglucan-synthesizing enzymes to form multiprotein complexes for xyloglucan synthesis in the Golgi. This is Galactoside 2-alpha-L-fucosyltransferase (FUT1) from Arabidopsis thaliana (Mouse-ear cress).